The chain runs to 314 residues: uncharacterized protein (314 aa).

A signal peptide spans methionine 1–alanine 26. The segment covering glycine 41–histidine 60 has biased composition (polar residues). Disordered stretches follow at residues glycine 41 to leucine 65, leucine 77 to glutamine 96, glycine 147 to leucine 191, and proline 292 to glycine 314. Residues glycine 147 to proline 157 are compositionally biased toward low complexity. The span at serine 167–arginine 177 shows a compositional bias: basic and acidic residues. Residues phenylalanine 303–glycine 314 show a composition bias toward pro residues.

As to quaternary structure, binds to numerous extracellular matrix proteins. Taste cell specific.

It is found in the secreted. The protein localises to the extracellular space. The protein resides in the extracellular matrix. This is an uncharacterized protein from Macaca mulatta (Rhesus macaque).